The following is a 1407-amino-acid chain: DNA-directed RNA polymerase subunit beta' (1407 aa).

4 residues coordinate Zn(2+): C70, C72, C85, and C88. Mg(2+)-binding residues include D460, D462, and D464. Zn(2+)-binding residues include C814, C889, C896, and C899. The disordered stretch occupies residues 1384–1407; sequence LVGRSTSSGTEVTSPSKDAIPLGG. The segment covering 1386 to 1399 has biased composition (polar residues); it reads GRSTSSGTEVTSPS.

This sequence belongs to the RNA polymerase beta' chain family. The RNAP catalytic core consists of 2 alpha, 1 beta, 1 beta' and 1 omega subunit. When a sigma factor is associated with the core the holoenzyme is formed, which can initiate transcription. The cofactor is Mg(2+). It depends on Zn(2+) as a cofactor.

The enzyme catalyses RNA(n) + a ribonucleoside 5'-triphosphate = RNA(n+1) + diphosphate. In terms of biological role, DNA-dependent RNA polymerase catalyzes the transcription of DNA into RNA using the four ribonucleoside triphosphates as substrates. This Xylella fastidiosa (strain Temecula1 / ATCC 700964) protein is DNA-directed RNA polymerase subunit beta'.